Consider the following 219-residue polypeptide: Histidinol-phosphate aminotransferase (219 aa).

This sequence belongs to the class-II pyridoxal-phosphate-dependent aminotransferase family. Histidinol-phosphate aminotransferase subfamily. In terms of assembly, homodimer. The cofactor is pyridoxal 5'-phosphate.

It catalyses the reaction L-histidinol phosphate + 2-oxoglutarate = 3-(imidazol-4-yl)-2-oxopropyl phosphate + L-glutamate. It functions in the pathway amino-acid biosynthesis; L-histidine biosynthesis; L-histidine from 5-phospho-alpha-D-ribose 1-diphosphate: step 7/9. The chain is Histidinol-phosphate aminotransferase (hisC) from Mycolicibacterium smegmatis (Mycobacterium smegmatis).